We begin with the raw amino-acid sequence, 138 residues long: ATP synthase epsilon chain (138 aa).

This sequence belongs to the ATPase epsilon chain family. As to quaternary structure, F-type ATPases have 2 components, CF(1) - the catalytic core - and CF(0) - the membrane proton channel. CF(1) has five subunits: alpha(3), beta(3), gamma(1), delta(1), epsilon(1). CF(0) has three main subunits: a, b and c.

The protein resides in the cell membrane. Produces ATP from ADP in the presence of a proton gradient across the membrane. This is ATP synthase epsilon chain (atpC) from Buchnera aphidicola subsp. Schizaphis graminum (strain Sg).